A 129-amino-acid chain; its full sequence is Histone H3 (129 aa).

A disordered region spans residues 1-36; it reads MSRTKETARAKRTITSKKSKKAPSGASGVKRSHRRW. Basic residues predominate over residues 10 to 21; that stretch reads AKRTITSKKSKK.

This sequence belongs to the histone H3 family. In terms of assembly, the nucleosome is a histone octamer containing two molecules each of H2A, H2B, H3 and H4 assembled in one H3-H4 heterotetramer and two H2A-H2B heterodimers. The octamer wraps approximately 147 bp of DNA.

Its subcellular location is the nucleus. It localises to the chromosome. In terms of biological role, core component of nucleosome. Nucleosomes wrap and compact DNA into chromatin, limiting DNA accessibility to the cellular machineries which require DNA as a template. Histones thereby play a central role in transcription regulation, DNA repair, DNA replication and chromosomal stability. DNA accessibility is regulated via a complex set of post-translational modifications of histones, also called histone code, and nucleosome remodeling. The sequence is that of Histone H3 from Leishmania infantum.